Consider the following 343-residue polypeptide: Putative adenosine/adenine deaminase (343 aa).

Histidine 16, histidine 18, and histidine 204 together coordinate Zn(2+). Position 18 (histidine 18) interacts with substrate. The active-site Proton donor is glutamate 207. Residue aspartate 285 coordinates Zn(2+). Residue aspartate 286 participates in substrate binding.

The protein belongs to the metallo-dependent hydrolases superfamily. Adenosine and AMP deaminases family. Requires Zn(2+) as cofactor.

Its function is as follows. Putative nucleoside deaminase. May catalyze the hydrolytic deamination of adenosine or some similar substrate and play a role in purine metabolism. This is Putative adenosine/adenine deaminase from Streptomyces coelicolor (strain ATCC BAA-471 / A3(2) / M145).